A 401-amino-acid chain; its full sequence is Carboxybiotin decarboxylase (401 aa).

10 consecutive transmembrane segments (helical) span residues 20 to 40, 46 to 66, 70 to 90, 107 to 127, 131 to 151, 173 to 193, 244 to 264, 275 to 295, 306 to 326, and 380 to 400; these read VISI…YFGF, PLIM…VLFL, VVGT…VNLM, LIAC…FILI, ASII…IIGI, MVLF…AIIA, LCLL…GIAI, LLET…LGAL, ISLI…GGVL, and VCGL…LFLL.

Its subcellular location is the cell membrane. It carries out the reaction N(6)-carboxybiotinyl-L-lysyl-[protein] + n Na(+)(in) + H(+) = N(6)-biotinyl-L-lysyl-[protein] + n Na(+)(out) + CO2. Its function is as follows. Beta subunit of the biotin-dependent malonate decarboxylase multienzyme complex (EC 7.2.4.4). Acts as an integral membrane-bound carboxybiotin protein decarboxylase by releasing the carboxyl group of the carboxylated biotin carrier MADF. The free energy of the decarboxylation reaction is used to pump Na(+) out of the cell. In Malonomonas rubra, this protein is Carboxybiotin decarboxylase (madB).